Consider the following 245-residue polypeptide: tRNA (guanine-N(1)-)-methyltransferase (245 aa).

Residues Gly-114 and 133-138 (IGDYVL) each bind S-adenosyl-L-methionine.

It belongs to the RNA methyltransferase TrmD family. Homodimer.

The protein resides in the cytoplasm. The enzyme catalyses guanosine(37) in tRNA + S-adenosyl-L-methionine = N(1)-methylguanosine(37) in tRNA + S-adenosyl-L-homocysteine + H(+). Functionally, specifically methylates guanosine-37 in various tRNAs. The chain is tRNA (guanine-N(1)-)-methyltransferase from Prochlorococcus marinus (strain MIT 9312).